Consider the following 213-residue polypeptide: Small ribosomal subunit protein uS4 (213 aa).

Positions 16-53 (GTDLGLKSGVKPYDVKTKKSARPPGQHGVSRNKSSEYS) are disordered. Positions 44 to 53 (VSRNKSSEYS) are enriched in polar residues. The S4 RNA-binding domain occupies 97-163 (SRLDNVVYRM…EKSREQLRIK (67 aa)).

It belongs to the universal ribosomal protein uS4 family. As to quaternary structure, part of the 30S ribosomal subunit. Contacts protein S5. The interaction surface between S4 and S5 is involved in control of translational fidelity.

Its function is as follows. One of the primary rRNA binding proteins, it binds directly to 16S rRNA where it nucleates assembly of the body of the 30S subunit. Functionally, with S5 and S12 plays an important role in translational accuracy. This is Small ribosomal subunit protein uS4 from Psychrobacter arcticus (strain DSM 17307 / VKM B-2377 / 273-4).